A 901-amino-acid chain; its full sequence is MAEGVVSFGVQKLWALLNRESERLNGIDEQVDGLKRQLRGLQSLLKDADAKKHGSDRVRNFLEDVKDLVFDAEDIIESYVLNKLRGEGKGVKNHVRRLACFLTDRHKVASDIEGITKRISKVIGEMQSLGIQQQIIDGGRSLSLQDIQREIRQTFPNSSESDLVGVEQSVEELVGPMVEIDNIQVVSISGMGGIGKTTLARQIFHHDLVRRHFDGFAWVCVSQQFTQKHVWQRILQELRPHDGEILQMDEYTIQGKLFQLLETGRYLVVLDDVWKEEDWDRIKEVFPRKRGWKMLLTSRNEGVGLHADPTCLSFRARILNPKESWKLFERIVPRRNETEYEEMEAIGKEMVTYCGGLPLAVKVLGGLLANKHTASEWKRVSENIGAQIVGKSCLDDNSLNSVYRILSLSYEDLPTDLKHCFLYLAHFPEDYKIKTRTLYSYWAAEGIYDGLTILDSGEDYLEELVRRNLVIAEKSNLSWRLKLCQMHDMMREVCISKAKVENFLQIIKVPTSTSTIIAQSPSRSRRLTVHSGKAFHILGHKKKVRSLLVLGLKEDLWIQSASRFQSLPLLRVLDLSSVKFEGGKLPSSIGGLIHLRFLSLHQAVVSHLPSTIRNLKLMLYLNLHVAIGVPVHVPNVLKEMLELRYLSLPLDMHDKTKLELGDLVNLEYLWCFSTQHSSVTDLLRMTKLRFFGVSFSERCTFENLSSSLRQFRKLETLSFIYSRKTYMVDYVGEFVLDFIHLKKLSLGVHLSKIPDQHQLPPHIAHIYLLFCHMEEDPMPILEKLLHLKSVELRRKAFIGRRMVCSKGGFPQLRALQISEQSELEEWIVEEGSMPCLRDLIIHSCEKLEELPDGLKYVTSLKELKIEGMKREWKEKLVGEDYYKVQHIPDVQFFNCDDEQRE.

The stretch at 15-56 (ALLNRESERLNGIDEQVDGLKRQLRGLQSLLKDADAKKHGSD) forms a coiled coil. The region spanning 144–453 (LQDIQREIRQ…AEGIYDGLTI (310 aa)) is the NB-ARC domain. Residues 190 to 197 (GMGGIGKT) and 385 to 392 (GAQIVGKS) contribute to the ATP site. 3 LRR repeats span residues 567–591 (LPLL…SIGG), 592–615 (LIHL…IRNL), and 833–858 (MPCL…KYVT).

Belongs to the disease resistance NB-LRR family. RPP8/HRT subfamily.

Functionally, disease resistance protein. This chain is Disease resistance RPP8-like protein 3 (RPP8L3), found in Arabidopsis thaliana (Mouse-ear cress).